We begin with the raw amino-acid sequence, 97 residues long: Putative regulatory protein Dole_1911 (97 aa).

This sequence belongs to the RemA family.

The protein is Putative regulatory protein Dole_1911 of Desulfosudis oleivorans (strain DSM 6200 / JCM 39069 / Hxd3) (Desulfococcus oleovorans).